We begin with the raw amino-acid sequence, 478 residues long: Sugar transporter ERD6-like 18 (478 aa).

Transmembrane regions (helical) follow at residues I31 to V51, I71 to F91, L110 to F130, I133 to I153, F162 to S180, I188 to P208, T270 to L290, I306 to V326, P333 to F353, V367 to L387, I407 to L427, and G433 to V453.

This sequence belongs to the major facilitator superfamily. Sugar transporter (TC 2.A.1.1) family. As to expression, expressed in leaf vasculature, stem and flowers.

Its subcellular location is the membrane. In terms of biological role, sugar transporter. This is Sugar transporter ERD6-like 18 (SFP2) from Arabidopsis thaliana (Mouse-ear cress).